Consider the following 578-residue polypeptide: MPRGLELLIAQTILQGFDAQYGRFLEVTSGAQQRFEQADWHAVQQAMKNRIHLYDHHVGLVVEQLRCITNGQSTDAAFLLRVKEHYTRLLPDYPRFEIAESFFNSVYCRLFDHRSLTPERLFIFSSQPERRFRTIPRPLAKDFHPDHGWESLLMRVISDLPLRLRWQNKSRDIHYIVRHLTETLGTDNLAESHLQVANELFYRNKAAWLVGKLITPSGTLPFLLPIHQTDDGELFIDTCLTTTAEASIVFGFARSYFMVYAPLPAALVEWLREILPGKTTAELYMAIGCQKHAKTESYREYLVYLQGCNEQFIEAPGIRGMVMLVFTLPGFDRVFKVIKDKFAPQKEMSAAHVRACYQLVKEHDRVGRMADTQEFENFVLEKRHISPALMALLLQEAAEKITDLGEQIVIRHLYIERRMVPLNIWLEQVEGQQLRDAIEEYGNAIRQLAAANIFPGDMLFKNFGVTRHGRVVFYDYDEICYMTEVNFRDIPPPRYPEDELASEPWYSVSPGDVFPEEFRHWLCADPRIGPLFEEMHADLFRADYWRALQNRIRDGHVEDVYAYRRRQRFSVRYGEMLF.

ATP contacts are provided by residues 315–321 (APGIRGM) and Lys-336. Asp-371 is an active-site residue.

Belongs to the AceK family.

It localises to the cytoplasm. The enzyme catalyses L-seryl-[isocitrate dehydrogenase] + ATP = O-phospho-L-seryl-[isocitrate dehydrogenase] + ADP + H(+). Functionally, bifunctional enzyme which can phosphorylate or dephosphorylate isocitrate dehydrogenase (IDH) on a specific serine residue. This is a regulatory mechanism which enables bacteria to bypass the Krebs cycle via the glyoxylate shunt in response to the source of carbon. When bacteria are grown on glucose, IDH is fully active and unphosphorylated, but when grown on acetate or ethanol, the activity of IDH declines drastically concomitant with its phosphorylation. This is Isocitrate dehydrogenase kinase/phosphatase from Escherichia coli O17:K52:H18 (strain UMN026 / ExPEC).